A 438-amino-acid polypeptide reads, in one-letter code: GTPase Der (438 aa).

EngA-type G domains lie at 4–168 (PIVA…NDPS) and 177–352 (IRIA…DNYS). GTP is bound by residues 10 to 17 (GRPNVGKS), 57 to 61 (DTGGI), 120 to 123 (NKID), 183 to 190 (GKPNVGKS), 230 to 234 (DTAGL), and 295 to 298 (NKWD). Residues 353–437 (KRVSTGLLND…GIEIEYRARK (85 aa)) enclose the KH-like domain.

The protein belongs to the TRAFAC class TrmE-Era-EngA-EngB-Septin-like GTPase superfamily. EngA (Der) GTPase family. As to quaternary structure, associates with the 50S ribosomal subunit.

Its function is as follows. GTPase that plays an essential role in the late steps of ribosome biogenesis. In Clostridium perfringens (strain ATCC 13124 / DSM 756 / JCM 1290 / NCIMB 6125 / NCTC 8237 / Type A), this protein is GTPase Der.